The following is a 276-amino-acid chain: Hydroxyethylthiazole kinase (276 aa).

Arg126 and Ser172 together coordinate ATP. Gly199 provides a ligand contact to substrate.

This sequence belongs to the Thz kinase family. Mg(2+) serves as cofactor.

It catalyses the reaction 5-(2-hydroxyethyl)-4-methylthiazole + ATP = 4-methyl-5-(2-phosphooxyethyl)-thiazole + ADP + H(+). It functions in the pathway cofactor biosynthesis; thiamine diphosphate biosynthesis; 4-methyl-5-(2-phosphoethyl)-thiazole from 5-(2-hydroxyethyl)-4-methylthiazole: step 1/1. Catalyzes the phosphorylation of the hydroxyl group of 4-methyl-5-beta-hydroxyethylthiazole (THZ). This chain is Hydroxyethylthiazole kinase, found in Burkholderia pseudomallei (strain 1710b).